A 380-amino-acid chain; its full sequence is Phosphate acyltransferase (380 aa).

A disordered region spans residues 1–23; it reads MPSPPPTPETATASDRTATPAPG.

This sequence belongs to the PlsX family. In terms of assembly, homodimer. Probably interacts with PlsY.

The protein resides in the cytoplasm. It carries out the reaction a fatty acyl-[ACP] + phosphate = an acyl phosphate + holo-[ACP]. The protein operates within lipid metabolism; phospholipid metabolism. Catalyzes the reversible formation of acyl-phosphate (acyl-PO(4)) from acyl-[acyl-carrier-protein] (acyl-ACP). This enzyme utilizes acyl-ACP as fatty acyl donor, but not acyl-CoA. The polypeptide is Phosphate acyltransferase (Acidiphilium cryptum (strain JF-5)).